A 426-amino-acid polypeptide reads, in one-letter code: Enolase (426 aa).

(2R)-2-phosphoglycerate is bound at residue Q163. E205 functions as the Proton donor in the catalytic mechanism. 3 residues coordinate Mg(2+): D242, E283, and D310. Residues K335, R364, S365, and K386 each contribute to the (2R)-2-phosphoglycerate site. K335 acts as the Proton acceptor in catalysis.

It belongs to the enolase family. The cofactor is Mg(2+).

The protein localises to the cytoplasm. The protein resides in the secreted. It localises to the cell surface. It carries out the reaction (2R)-2-phosphoglycerate = phosphoenolpyruvate + H2O. The protein operates within carbohydrate degradation; glycolysis; pyruvate from D-glyceraldehyde 3-phosphate: step 4/5. Functionally, catalyzes the reversible conversion of 2-phosphoglycerate (2-PG) into phosphoenolpyruvate (PEP). It is essential for the degradation of carbohydrates via glycolysis. In Arthrobacter sp. (strain FB24), this protein is Enolase.